Consider the following 334-residue polypeptide: N-chimaerin (334 aa).

Polar residues predominate over residues 1–10; the sequence is MPSKESWSGR. The tract at residues 1-22 is disordered; that stretch reads MPSKESWSGRKTNRATVHKSKQ. Phosphothreonine is present on Thr67. The Phorbol-ester/DAG-type zinc-finger motif lies at 80–130; sequence VHNFKVHTFRGPHWCEYCANFMWGLIAQGVKCADCGLNVHKQCSKMVPNDC. Positions 143–334 constitute a Rho-GAP domain; that stretch reads CDLTTLVKAR…LLIKNEDILF (192 aa). Thr215 is modified (phosphothreonine).

Interacts with EPHA4; effector of EPHA4 in axon guidance linking EPHA4 activation to RAC1 regulation. Phosphorylated. Phosphorylation is EPHA4 kinase activity-dependent.

Its function is as follows. GTPase-activating protein for p21-rac and a phorbol ester receptor. Involved in the assembly of neuronal locomotor circuits as a direct effector of EPHA4 in axon guidance. The polypeptide is N-chimaerin (CHN1) (Bos taurus (Bovine)).